Consider the following 407-residue polypeptide: FMN-dependent alpha-hydroxy acid dehydrogenase PB1A11.03 (407 aa).

The 379-residue stretch at 28–406 folds into the FMN hydroxy acid dehydrogenase domain; the sequence is QRPQITVDGR…DLNRDVLYKE (379 aa). Residue Tyr54 coordinates a 2-oxocarboxylate. 2 residues coordinate FMN: Ser136 and Gln158. Tyr160 is an a 2-oxocarboxylate binding site. Thr188 contributes to the FMN binding site. A 2-oxocarboxylate is bound at residue Arg197. FMN is bound at residue Lys277. The active-site Proton acceptor is His301. A 2-oxocarboxylate is bound at residue Arg304. FMN-binding positions include 332 to 336 and 355 to 356; these read DSGVR and GR.

It belongs to the FMN-dependent alpha-hydroxy acid dehydrogenase family. FMN serves as cofactor.

The protein localises to the cytoplasm. It is found in the nucleus. The sequence is that of FMN-dependent alpha-hydroxy acid dehydrogenase PB1A11.03 from Schizosaccharomyces pombe (strain 972 / ATCC 24843) (Fission yeast).